The sequence spans 809 residues: Origin of replication complex subunit 1A (809 aa).

The segment covering 1 to 47 (MASSLSSKAKTFKSPTKTPTKMYRKSYLSPSSTSLTPPQTPETLTPL) has biased composition (low complexity). The segment at 1–69 (MASSLSSKAK…LGNDPIDLPG (69 aa)) is disordered. Positions 160-185 (DPEIEDCQICFKSHTNTIMIECDDCL) are histone H3 binding. A PHD-type zinc finger spans residues 163 to 213 (IEDCQICFKSHTNTIMIECDDCLGGFHLNCLKPPLKEVPEGDWICQFCEVK). Residues Cys-166, Cys-169, Cys-181, Cys-184, His-189, and Cys-192 each coordinate Zn(2+). The segment at 201 to 205 (PEGDW) is histone H3 binding. Residues Cys-207 and Cys-210 each contribute to the Zn(2+) site. Residues 223–341 (PKPPEGKKLA…VHWGSFKRVA (119 aa)) enclose the BAH domain. The tract at residues 316–321 (ASNDGD) is histone H3 binding. The tract at residues 431–799 (PKSLPCRSKE…DDVAFALKDN (369 aa)) is necessary and sufficient for ORC complex assembly. Residues 466–473 (GVPGTGKT) and 466–474 (GVPGTGKTI) contribute to the ATP site. Mg(2+)-binding residues include Asp-556 and Glu-557. ATP-binding residues include Glu-557, Asn-590, and Arg-655.

This sequence belongs to the ORC1 family. Component of the origin recognition complex (ORC) composed of at least ORC1 (ORC1A or ORC1B), ORC2, ORC3, ORC4, ORC5 and ORC6. ORC is regulated in a cell-cycle and development dependent manner. It is sequentially assembled at the exit from anaphase of mitosis and disassembled as cells enter S phase. Interacts directly with ORC2, ORC3, ORC4 and ORC5. Binds mostly unmodified histone H3, and, with lower efficiency, H3K4me1 H3K4me2 and H3K4me3. Follow a cell-cycle regulation with a peak at the G1/S-phase. Mostly expressed in siliques, flowers and flower buds, and, to a lower extent, in roots, leaves and stems.

The protein resides in the nucleus. Functionally, essential protein. Component of the origin recognition complex (ORC) that binds origins of replication. It has a role in both chromosomal replication and mating type transcriptional silencing. Binds to the ARS consensus sequence (ACS) of origins of replication. H3K4me3 effector that positively regulates the transcription of a subset of genes. This chain is Origin of replication complex subunit 1A, found in Arabidopsis thaliana (Mouse-ear cress).